The chain runs to 156 residues: Ribosome maturation factor RimP (156 aa).

It belongs to the RimP family.

It localises to the cytoplasm. Required for maturation of 30S ribosomal subunits. The polypeptide is Ribosome maturation factor RimP (Prochlorococcus marinus (strain NATL2A)).